Consider the following 776-residue polypeptide: Endonuclease MutS2 (776 aa).

330 to 337 (GPNTGGKT) is an ATP binding site. The Smr domain occupies 701-776 (LDLRGMRYEE…GSGATIAILK (76 aa)).

This sequence belongs to the DNA mismatch repair MutS family. MutS2 subfamily. In terms of assembly, homodimer. Binds to stalled ribosomes, contacting rRNA.

Functionally, endonuclease that is involved in the suppression of homologous recombination and thus may have a key role in the control of bacterial genetic diversity. Its function is as follows. Acts as a ribosome collision sensor, splitting the ribosome into its 2 subunits. Detects stalled/collided 70S ribosomes which it binds and splits by an ATP-hydrolysis driven conformational change. Acts upstream of the ribosome quality control system (RQC), a ribosome-associated complex that mediates the extraction of incompletely synthesized nascent chains from stalled ribosomes and their subsequent degradation. Probably generates substrates for RQC. This chain is Endonuclease MutS2, found in Lactococcus lactis subsp. cremoris (strain SK11).